Reading from the N-terminus, the 125-residue chain is Large ribosomal subunit protein bL12 (125 aa).

It belongs to the bacterial ribosomal protein bL12 family. As to quaternary structure, homodimer. Part of the ribosomal stalk of the 50S ribosomal subunit. Forms a multimeric L10(L12)X complex, where L10 forms an elongated spine to which 2 to 4 L12 dimers bind in a sequential fashion. Binds GTP-bound translation factors.

Functionally, forms part of the ribosomal stalk which helps the ribosome interact with GTP-bound translation factors. Is thus essential for accurate translation. The sequence is that of Large ribosomal subunit protein bL12 from Campylobacter concisus (strain 13826).